The chain runs to 834 residues: Protein ROOT HAIR DEFECTIVE 3 homolog 2 (834 aa).

Residues 1-683 (MGENDDGCST…EAHKRNNNWL (683 aa)) lie on the Cytoplasmic side of the membrane. Residues 37 to 252 (GLSYAVVAIM…ISPGGLAGDR (216 aa)) enclose the GB1/RHD3-type G domain. 47–54 (GPQSSGKS) lines the GTP pocket. The stretch at 214-241 (MIVALSSYEEKEKQFEQEVAELRQRFFH) forms a coiled coil. A helical transmembrane segment spans residues 684-704 (PPAWAIVLMIVLGFNEFMMLL). Topologically, residues 705–707 (KNP) are lumenal. Residues 708–728 (LYLLGFFVAFLLSKALWVQLD) traverse the membrane as a helical segment. Topologically, residues 729-834 (IPREFQHGAV…NVQESEISQM (106 aa)) are cytoplasmic. Over residues 767–783 (TTQEVPDLSASQTYRQQ) the composition is skewed to polar residues. Residues 767–834 (TTQEVPDLSA…NVQESEISQM (68 aa)) are disordered. Over residues 784–803 (SPSHSISSTISESVASNISS) the composition is skewed to low complexity. Residues 823-834 (TNNVQESEISQM) show a composition bias toward polar residues.

Belongs to the TRAFAC class dynamin-like GTPase superfamily. GB1/RHD3 GTPase family. RHD3 subfamily. As to expression, expressed in roots, leaves, stems and flowers.

It is found in the endoplasmic reticulum membrane. Functionally, probable GTP-binding protein that may be involved in cell development. The polypeptide is Protein ROOT HAIR DEFECTIVE 3 homolog 2 (Arabidopsis thaliana (Mouse-ear cress)).